The following is a 257-amino-acid chain: Zinc import ATP-binding protein ZnuC (257 aa).

An ABC transporter domain is found at 6-221 (IRLDQVGVTF…PAFVELFGKT (216 aa)). 38 to 45 (GPNGAGKT) is a binding site for ATP.

This sequence belongs to the ABC transporter superfamily. Zinc importer (TC 3.A.1.15.5) family. The complex is composed of two ATP-binding proteins (ZnuC), two transmembrane proteins (ZnuB) and a solute-binding protein (ZnuA).

It is found in the cell inner membrane. The catalysed reaction is Zn(2+)(out) + ATP(in) + H2O(in) = Zn(2+)(in) + ADP(in) + phosphate(in) + H(+)(in). In terms of biological role, part of the ABC transporter complex ZnuABC involved in zinc import. Responsible for energy coupling to the transport system. This chain is Zinc import ATP-binding protein ZnuC, found in Pseudomonas putida (strain ATCC 47054 / DSM 6125 / CFBP 8728 / NCIMB 11950 / KT2440).